The following is a 360-amino-acid chain: Dihydroorotate dehydrogenase (quinone) (360 aa).

Residues 60–64 (AGFDK) and T84 contribute to the FMN site. K64 contributes to the substrate binding site. Position 109–113 (109–113 (NRMGF)) interacts with substrate. The FMN site is built by N137 and N168. Position 168 (N168) interacts with substrate. S171 acts as the Nucleophile in catalysis. N173 contributes to the substrate binding site. K213 and S241 together coordinate FMN. 242–243 (NT) contributes to the substrate binding site. Residues G264, G293, and 314-315 (YS) contribute to the FMN site.

Belongs to the dihydroorotate dehydrogenase family. Type 2 subfamily. As to quaternary structure, monomer. The cofactor is FMN.

The protein resides in the cell membrane. It carries out the reaction (S)-dihydroorotate + a quinone = orotate + a quinol. Its pathway is pyrimidine metabolism; UMP biosynthesis via de novo pathway; orotate from (S)-dihydroorotate (quinone route): step 1/1. In terms of biological role, catalyzes the conversion of dihydroorotate to orotate with quinone as electron acceptor. This Bartonella tribocorum (strain CIP 105476 / IBS 506) protein is Dihydroorotate dehydrogenase (quinone).